The sequence spans 166 residues: Endoribonuclease YbeY (166 aa).

Zn(2+) is bound by residues His-129, His-133, and His-139.

Belongs to the endoribonuclease YbeY family. It depends on Zn(2+) as a cofactor.

It localises to the cytoplasm. Functionally, single strand-specific metallo-endoribonuclease involved in late-stage 70S ribosome quality control and in maturation of the 3' terminus of the 16S rRNA. This chain is Endoribonuclease YbeY, found in Heliobacterium modesticaldum (strain ATCC 51547 / Ice1).